The chain runs to 61 residues: Protein translocase subunit SecE (61 aa).

Residues 38-58 traverse the membrane as a helical segment; it reads GIGMILIGTIGMIIRIIGYLV.

It belongs to the SecE/SEC61-gamma family. In terms of assembly, component of the Sec protein translocase complex. Heterotrimer consisting of SecY (alpha), SecG (beta) and SecE (gamma) subunits. The heterotrimers can form oligomers, although 1 heterotrimer is thought to be able to translocate proteins. Interacts with the ribosome. May interact with SecDF, and other proteins may be involved.

The protein resides in the cell membrane. In terms of biological role, essential subunit of the Sec protein translocation channel SecYEG. Clamps together the 2 halves of SecY. May contact the channel plug during translocation. The sequence is that of Protein translocase subunit SecE from Thermococcus kodakarensis (strain ATCC BAA-918 / JCM 12380 / KOD1) (Pyrococcus kodakaraensis (strain KOD1)).